We begin with the raw amino-acid sequence, 388 residues long: Serine/threonine-protein phosphatase sitA (388 aa).

Mn(2+)-binding residues include Asp-67 and His-69. Residues 86–146 (PDGSEAEAPK…SQRDRSSSSG (61 aa)) are disordered. Mn(2+) contacts are provided by Asp-161 and Asn-193. His-194 serves as the catalytic Proton donor. 2 residues coordinate Mn(2+): His-243 and His-317.

It belongs to the PPP phosphatase family. PP-6 (PP-V) subfamily. Mn(2+) is required as a cofactor.

It catalyses the reaction O-phospho-L-threonyl-[protein] + H2O = L-threonyl-[protein] + phosphate. Functionally, protein phosphatase that acts as a modulator of pkcA/mpkA activity involved in the cell wall integrity pathway. Plays an important role in regulation of adhesion, cell wall integrity, biofilm formation, and virulence. This Aspergillus fumigatus (strain ATCC MYA-4609 / CBS 101355 / FGSC A1100 / Af293) (Neosartorya fumigata) protein is Serine/threonine-protein phosphatase sitA.